We begin with the raw amino-acid sequence, 177 residues long: ATP synthase subunit b (177 aa).

A helical membrane pass occupies residues 15 to 35; that stretch reads GISGGTIIYQLLMFIILLALL.

It belongs to the ATPase B chain family. As to quaternary structure, F-type ATPases have 2 components, F(1) - the catalytic core - and F(0) - the membrane proton channel. F(1) has five subunits: alpha(3), beta(3), gamma(1), delta(1), epsilon(1). F(0) has three main subunits: a(1), b(2) and c(10-14). The alpha and beta chains form an alternating ring which encloses part of the gamma chain. F(1) is attached to F(0) by a central stalk formed by the gamma and epsilon chains, while a peripheral stalk is formed by the delta and b chains.

The protein resides in the cell membrane. Its function is as follows. F(1)F(0) ATP synthase produces ATP from ADP in the presence of a proton or sodium gradient. F-type ATPases consist of two structural domains, F(1) containing the extramembraneous catalytic core and F(0) containing the membrane proton channel, linked together by a central stalk and a peripheral stalk. During catalysis, ATP synthesis in the catalytic domain of F(1) is coupled via a rotary mechanism of the central stalk subunits to proton translocation. In terms of biological role, component of the F(0) channel, it forms part of the peripheral stalk, linking F(1) to F(0). This chain is ATP synthase subunit b, found in Geobacillus kaustophilus (strain HTA426).